The sequence spans 289 residues: ATP synthase subunit a (289 aa).

Transmembrane regions (helical) follow at residues 43 to 63, 101 to 121, 160 to 180, 193 to 213, 232 to 252, and 259 to 279; these read AFHV…VLIF, SAVI…MNAV, LSVF…GGFI, LFVQ…TLIA, VFIL…GLGV, and AVFH…LTIV.

This sequence belongs to the ATPase A chain family. As to quaternary structure, F-type ATPases have 2 components, CF(1) - the catalytic core - and CF(0) - the membrane proton channel. CF(1) has five subunits: alpha(3), beta(3), gamma(1), delta(1), epsilon(1). CF(0) has three main subunits: a(1), b(2) and c(9-12). The alpha and beta chains form an alternating ring which encloses part of the gamma chain. CF(1) is attached to CF(0) by a central stalk formed by the gamma and epsilon chains, while a peripheral stalk is formed by the delta and b chains.

The protein localises to the cell inner membrane. Key component of the proton channel; it plays a direct role in the translocation of protons across the membrane. The protein is ATP synthase subunit a of Pseudomonas syringae pv. syringae (strain B728a).